Consider the following 590-residue polypeptide: Phosphomethylpyrimidine synthase (590 aa).

Substrate contacts are provided by residues asparagine 197, methionine 226, tyrosine 255, histidine 291, serine 311 to glycine 313, aspartate 352 to arginine 355, and glutamate 391. Histidine 395 serves as a coordination point for Zn(2+). Tyrosine 418 serves as a coordination point for substrate. Histidine 459 is a Zn(2+) binding site. Residues cysteine 539, cysteine 542, and cysteine 547 each coordinate [4Fe-4S] cluster.

The protein belongs to the ThiC family. Requires [4Fe-4S] cluster as cofactor.

It carries out the reaction 5-amino-1-(5-phospho-beta-D-ribosyl)imidazole + S-adenosyl-L-methionine = 4-amino-2-methyl-5-(phosphooxymethyl)pyrimidine + CO + 5'-deoxyadenosine + formate + L-methionine + 3 H(+). It participates in cofactor biosynthesis; thiamine diphosphate biosynthesis. Functionally, catalyzes the synthesis of the hydroxymethylpyrimidine phosphate (HMP-P) moiety of thiamine from aminoimidazole ribotide (AIR) in a radical S-adenosyl-L-methionine (SAM)-dependent reaction. This is Phosphomethylpyrimidine synthase from Bacillus velezensis (strain DSM 23117 / BGSC 10A6 / LMG 26770 / FZB42) (Bacillus amyloliquefaciens subsp. plantarum).